Reading from the N-terminus, the 440-residue chain is C4-dicarboxylate transport protein (440 aa).

Transmembrane regions (helical) follow at residues 7-29 (LYKSLYVQVLVAITIGILLGHYY), 49-66 (MVIAPIIFCTVVSGIAGM), 79-101 (ALLYFEIVSTIALIIGLVVVNVV), 143-165 (VVGAFANGDILQVLMFSVLFGFA), 186-208 (VMFNIINMIMKLAPIGAFGAMAF), 221-243 (LGYLMACFYITCLLFVLVVLGGI), 291-313 (VVGLVIPTGYSFNLDGTSIYLTM), 328-350 (ITHQITLLLVLLVASKGAAGVTG), and 355-377 (VLAATLSAVGHLPVAGLALILGI). The tract at residues 419-440 (GGAPLIDTRPTDDLGVAEGPAR) is disordered.

This sequence belongs to the dicarboxylate/amino acid:cation symporter (DAACS) (TC 2.A.23) family.

Its subcellular location is the cell inner membrane. In terms of biological role, responsible for the transport of dicarboxylates such as succinate, fumarate, and malate from the periplasm across the membrane. This chain is C4-dicarboxylate transport protein, found in Pseudomonas putida (strain ATCC 47054 / DSM 6125 / CFBP 8728 / NCIMB 11950 / KT2440).